Consider the following 186-residue polypeptide: MSSLAPCFTVGSIVRCKTCFGDNISGEVVAFDLGVKMLIMKCPSSNGGGDEQTTCNVTIVNLSLCMDIEIVKEAIPPAEVQQPEPIDLPMIRERYRYATEHRTLSCRSYHPNASPFGQALFRLLVKRFGDPAIIWQNKGDQVAINILRQVVIDAPYATENIRYLDWNPKLAICVQEVVQNFCSKQF.

One can recognise a Sm domain in the interval 1 to 74 (MSSLAPCFTV…CMDIEIVKEA (74 aa)). An AD domain is found at 84-186 (EPIDLPMIRE…VVQNFCSKQF (103 aa)).

It belongs to the LSM12 family. Interacts with Sbat; along with Sbat and Vlet, may form an accessory subcomplex involved in SMN complex function.

Its function is as follows. May have an accessory function in the survival motor neuron (SMN) complex. The protein is LSM12 homolog B of Drosophila melanogaster (Fruit fly).